Here is a 475-residue protein sequence, read N- to C-terminus: Ribulose bisphosphate carboxylase large chain (475 aa).

Positions 1–2 (MS) are excised as a propeptide. N-acetylproline is present on proline 3. Lysine 14 bears the N6,N6,N6-trimethyllysine mark. Asparagine 123 and threonine 173 together coordinate substrate. Catalysis depends on lysine 175, which acts as the Proton acceptor. Lysine 177 is a substrate binding site. Residues lysine 201, aspartate 203, and glutamate 204 each contribute to the Mg(2+) site. An N6-carboxylysine modification is found at lysine 201. The active-site Proton acceptor is the histidine 294. 3 residues coordinate substrate: arginine 295, histidine 327, and serine 379.

The protein belongs to the RuBisCO large chain family. Type I subfamily. Heterohexadecamer of 8 large chains and 8 small chains; disulfide-linked. The disulfide link is formed within the large subunit homodimers. It depends on Mg(2+) as a cofactor. The disulfide bond which can form in the large chain dimeric partners within the hexadecamer appears to be associated with oxidative stress and protein turnover.

The protein localises to the plastid. The protein resides in the chloroplast. The enzyme catalyses 2 (2R)-3-phosphoglycerate + 2 H(+) = D-ribulose 1,5-bisphosphate + CO2 + H2O. The catalysed reaction is D-ribulose 1,5-bisphosphate + O2 = 2-phosphoglycolate + (2R)-3-phosphoglycerate + 2 H(+). RuBisCO catalyzes two reactions: the carboxylation of D-ribulose 1,5-bisphosphate, the primary event in carbon dioxide fixation, as well as the oxidative fragmentation of the pentose substrate in the photorespiration process. Both reactions occur simultaneously and in competition at the same active site. The sequence is that of Ribulose bisphosphate carboxylase large chain from Pinus pinea (Italian stone pine).